The primary structure comprises 162 residues: G/U mismatch-specific DNA glycosylase (162 aa).

It belongs to the uracil-DNA glycosylase (UDG) superfamily. TDG/mug family. Binds DNA as a monomer.

It is found in the cytoplasm. It catalyses the reaction Specifically hydrolyzes mismatched double-stranded DNA and polynucleotides, releasing free uracil.. Excises ethenocytosine and uracil, which can arise by alkylation or deamination of cytosine, respectively, from the corresponding mispairs with guanine in ds-DNA. It is capable of hydrolyzing the carbon-nitrogen bond between the sugar-phosphate backbone of the DNA and the mispaired base. The complementary strand guanine functions in substrate recognition. Required for DNA damage lesion repair in stationary-phase cells. This is G/U mismatch-specific DNA glycosylase from Serratia marcescens.